The sequence spans 198 residues: Elongation factor Ts (198 aa).

Residues 81–84 (TDFV) are involved in Mg(2+) ion dislocation from EF-Tu.

The protein belongs to the EF-Ts family.

The protein resides in the cytoplasm. Associates with the EF-Tu.GDP complex and induces the exchange of GDP to GTP. It remains bound to the aminoacyl-tRNA.EF-Tu.GTP complex up to the GTP hydrolysis stage on the ribosome. This is Elongation factor Ts from Leptospira biflexa serovar Patoc (strain Patoc 1 / Ames).